The following is a 220-amino-acid chain: Thiamine-phosphate synthase (220 aa).

Residues 46–50 (QFREK) and asparagine 83 contribute to the 4-amino-2-methyl-5-(diphosphooxymethyl)pyrimidine site. Residues aspartate 84 and aspartate 103 each coordinate Mg(2+). Residue serine 122 coordinates 4-amino-2-methyl-5-(diphosphooxymethyl)pyrimidine. 2-[(2R,5Z)-2-carboxy-4-methylthiazol-5(2H)-ylidene]ethyl phosphate is bound at residue 149–151 (TNS). Lysine 152 contacts 4-amino-2-methyl-5-(diphosphooxymethyl)pyrimidine. 2-[(2R,5Z)-2-carboxy-4-methylthiazol-5(2H)-ylidene]ethyl phosphate is bound by residues glycine 181 and 201 to 202 (IS).

The protein belongs to the thiamine-phosphate synthase family. It depends on Mg(2+) as a cofactor.

The enzyme catalyses 2-[(2R,5Z)-2-carboxy-4-methylthiazol-5(2H)-ylidene]ethyl phosphate + 4-amino-2-methyl-5-(diphosphooxymethyl)pyrimidine + 2 H(+) = thiamine phosphate + CO2 + diphosphate. It catalyses the reaction 2-(2-carboxy-4-methylthiazol-5-yl)ethyl phosphate + 4-amino-2-methyl-5-(diphosphooxymethyl)pyrimidine + 2 H(+) = thiamine phosphate + CO2 + diphosphate. The catalysed reaction is 4-methyl-5-(2-phosphooxyethyl)-thiazole + 4-amino-2-methyl-5-(diphosphooxymethyl)pyrimidine + H(+) = thiamine phosphate + diphosphate. The protein operates within cofactor biosynthesis; thiamine diphosphate biosynthesis; thiamine phosphate from 4-amino-2-methyl-5-diphosphomethylpyrimidine and 4-methyl-5-(2-phosphoethyl)-thiazole: step 1/1. Functionally, condenses 4-methyl-5-(beta-hydroxyethyl)thiazole monophosphate (THZ-P) and 2-methyl-4-amino-5-hydroxymethyl pyrimidine pyrophosphate (HMP-PP) to form thiamine monophosphate (TMP). In Mannheimia succiniciproducens (strain KCTC 0769BP / MBEL55E), this protein is Thiamine-phosphate synthase.